The sequence spans 326 residues: Beta-ketoacyl-[acyl-carrier-protein] synthase III (326 aa).

Catalysis depends on residues cysteine 120 and histidine 253. Residues 254–258 (QANIR) form an ACP-binding region. Asparagine 283 is an active-site residue.

It belongs to the thiolase-like superfamily. FabH family. In terms of assembly, homodimer.

It is found in the cytoplasm. It carries out the reaction malonyl-[ACP] + acetyl-CoA + H(+) = 3-oxobutanoyl-[ACP] + CO2 + CoA. It participates in lipid metabolism; fatty acid biosynthesis. In terms of biological role, catalyzes the condensation reaction of fatty acid synthesis by the addition to an acyl acceptor of two carbons from malonyl-ACP. Catalyzes the first condensation reaction which initiates fatty acid synthesis and may therefore play a role in governing the total rate of fatty acid production. Possesses both acetoacetyl-ACP synthase and acetyl transacylase activities. Its substrate specificity determines the biosynthesis of branched-chain and/or straight-chain of fatty acids. The protein is Beta-ketoacyl-[acyl-carrier-protein] synthase III of Cupriavidus necator (strain ATCC 17699 / DSM 428 / KCTC 22496 / NCIMB 10442 / H16 / Stanier 337) (Ralstonia eutropha).